Consider the following 118-residue polypeptide: Basic phospholipase A2 PA-13 (118 aa).

Disulfide bonds link Cys11–Cys71, Cys27–Cys117, Cys29–Cys45, Cys44–Cys98, Cys51–Cys91, Cys60–Cys84, and Cys78–Cys89. Residues Tyr28, Gly30, and Gly32 each coordinate Ca(2+). His48 is an active-site residue. A Ca(2+)-binding site is contributed by Asp49. Asp92 is an active-site residue.

This sequence belongs to the phospholipase A2 family. Group I subfamily. D49 sub-subfamily. It depends on Ca(2+) as a cofactor. In terms of tissue distribution, expressed by the venom gland.

The protein resides in the secreted. It carries out the reaction a 1,2-diacyl-sn-glycero-3-phosphocholine + H2O = a 1-acyl-sn-glycero-3-phosphocholine + a fatty acid + H(+). Functionally, PLA2 catalyzes the calcium-dependent hydrolysis of the 2-acyl groups in 3-sn-phosphoglycerides. In Pseudechis australis (Mulga snake), this protein is Basic phospholipase A2 PA-13.